Consider the following 422-residue polypeptide: 2,3-bisphosphoglycerate-independent phosphoglycerate mutase (422 aa).

The interval 173 to 194 (DADPKRVGKPVKDVKPTSDDPA) is disordered. Residues 174–190 (ADPKRVGKPVKDVKPTS) show a composition bias toward basic and acidic residues.

This sequence belongs to the BPG-independent phosphoglycerate mutase family. A-PGAM subfamily.

It catalyses the reaction (2R)-2-phosphoglycerate = (2R)-3-phosphoglycerate. It participates in carbohydrate degradation; glycolysis; pyruvate from D-glyceraldehyde 3-phosphate: step 3/5. In terms of biological role, catalyzes the interconversion of 2-phosphoglycerate and 3-phosphoglycerate. In Methanopyrus kandleri (strain AV19 / DSM 6324 / JCM 9639 / NBRC 100938), this protein is 2,3-bisphosphoglycerate-independent phosphoglycerate mutase.